A 96-amino-acid polypeptide reads, in one-letter code: ATP synthase subunit c (96 aa).

Transmembrane regions (helical) follow at residues 28–50 (LGAG…NIGA) and 75–95 (AVTE…LFVL).

Belongs to the ATPase C chain family. As to quaternary structure, F-type ATPases have 2 components, F(1) - the catalytic core - and F(0) - the membrane proton channel. F(1) has five subunits: alpha(3), beta(3), gamma(1), delta(1), epsilon(1). F(0) has three main subunits: a(1), b(2) and c(10-14). The alpha and beta chains form an alternating ring which encloses part of the gamma chain. F(1) is attached to F(0) by a central stalk formed by the gamma and epsilon chains, while a peripheral stalk is formed by the delta and b chains.

The protein localises to the cell inner membrane. F(1)F(0) ATP synthase produces ATP from ADP in the presence of a proton or sodium gradient. F-type ATPases consist of two structural domains, F(1) containing the extramembraneous catalytic core and F(0) containing the membrane proton channel, linked together by a central stalk and a peripheral stalk. During catalysis, ATP synthesis in the catalytic domain of F(1) is coupled via a rotary mechanism of the central stalk subunits to proton translocation. In terms of biological role, key component of the F(0) channel; it plays a direct role in translocation across the membrane. A homomeric c-ring of between 10-14 subunits forms the central stalk rotor element with the F(1) delta and epsilon subunits. The polypeptide is ATP synthase subunit c (Petrotoga mobilis (strain DSM 10674 / SJ95)).